An 85-amino-acid chain; its full sequence is Probable Sec-independent protein translocase protein TatE (85 aa).

Residues 1 to 21 (MEGLSITKLLVVGILIVLLFG) form a helical membrane-spanning segment. The disordered stretch occupies residues 64 to 85 (KTVAETKAASDSQAAASVERKD).

The protein belongs to the TatA/E family. TatE subfamily.

The protein localises to the cell inner membrane. Part of the twin-arginine translocation (Tat) system that transports large folded proteins containing a characteristic twin-arginine motif in their signal peptide across membranes. TatE shares overlapping functions with TatA. In Yersinia pestis, this protein is Probable Sec-independent protein translocase protein TatE.